Consider the following 47-residue polypeptide: MKKVPLTCDVCGSRNYNVPKQSNLTSRLTLKKFCSRCNAHTMHKESK.

The protein belongs to the bacterial ribosomal protein bL33 family.

The sequence is that of Large ribosomal subunit protein bL33 from Staphylococcus xylosus.